The following is a 159-amino-acid chain: uncharacterized protein (159 aa).

This is an uncharacterized protein from Aquifex aeolicus (strain VF5).